The following is a 381-amino-acid chain: Cell division protein FtsZ (381 aa).

The disordered stretch occupies residues 1 to 25 (MKFINDAIKESEKREKPSSSSMNSE). Basic and acidic residues predominate over residues 7–17 (AIKESEKREKP). GTP-binding positions include 48–52 (GAGNN), 135–137 (GTG), Glu166, Arg170, and Asp213.

It belongs to the FtsZ family. Homodimer. Polymerizes to form a dynamic ring structure in a strictly GTP-dependent manner. Interacts directly with several other division proteins.

The protein resides in the cytoplasm. Functionally, essential cell division protein that forms a contractile ring structure (Z ring) at the future cell division site. The regulation of the ring assembly controls the timing and the location of cell division. One of the functions of the FtsZ ring is to recruit other cell division proteins to the septum to produce a new cell wall between the dividing cells. Binds GTP and shows GTPase activity. The polypeptide is Cell division protein FtsZ (Methanothermobacter thermautotrophicus (strain ATCC 29096 / DSM 1053 / JCM 10044 / NBRC 100330 / Delta H) (Methanobacterium thermoautotrophicum)).